The primary structure comprises 525 residues: Cytochrome P450 4V2 (525 aa).

A helical transmembrane segment spans residues 13–33 (LLLWGAASAVSLAGASLVLSL). Residues E329 and C467 each coordinate heme.

The protein belongs to the cytochrome P450 family. It depends on heme as a cofactor.

The protein localises to the endoplasmic reticulum membrane. The enzyme catalyses dodecanoate + reduced [NADPH--hemoprotein reductase] + O2 = 12-hydroxydodecanoate + oxidized [NADPH--hemoprotein reductase] + H2O + H(+). It carries out the reaction tetradecanoate + reduced [NADPH--hemoprotein reductase] + O2 = 14-hydroxytetradecanoate + oxidized [NADPH--hemoprotein reductase] + H2O + H(+). The catalysed reaction is hexadecanoate + reduced [NADPH--hemoprotein reductase] + O2 = 16-hydroxyhexadecanoate + oxidized [NADPH--hemoprotein reductase] + H2O + H(+). It catalyses the reaction (5Z,8Z,11Z,14Z,17Z)-eicosapentaenoate + reduced [NADPH--hemoprotein reductase] + O2 = 20-hydroxy-(5Z,8Z,11Z,14Z,17Z)-eicosapentaenoate + oxidized [NADPH--hemoprotein reductase] + H2O + H(+). The enzyme catalyses (4Z,7Z,10Z,13Z,16Z,19Z)-docosahexaenoate + reduced [NADPH--hemoprotein reductase] + O2 = 22-hydroxy-(4Z,7Z,10Z,13Z,16Z,19Z)-docosahexaenoate + oxidized [NADPH--hemoprotein reductase] + H2O + H(+). Its pathway is lipid metabolism; fatty acid metabolism. Inhibited by N-hydroxy-N'-(4-n-butyl-2-methylphenyl formamidine)(HET0016) with an IC(50) of 38 nM. A cytochrome P450 monooxygenase involved in fatty acid metabolism in the eye. Catalyzes the omega-hydroxylation of polyunsaturated fatty acids (PUFAs) docosahexaenoate (DHA) and its precursor eicosapentaenoate (EPA), and may contribute to the homeostasis of these retinal PUFAs. Omega hydroxylates saturated fatty acids such as laurate, myristate and palmitate, the catalytic efficiency decreasing in the following order: myristate &gt; laurate &gt; palmitate (C14&gt;C12&gt;C16). Mechanistically, uses molecular oxygen inserting one oxygen atom into a substrate, and reducing the second into a water molecule, with two electrons provided by NADPH via cytochrome P450 reductase (CPR; NADPH-ferrihemoprotein reductase). This chain is Cytochrome P450 4V2 (CYP4V2), found in Pongo abelii (Sumatran orangutan).